We begin with the raw amino-acid sequence, 83 residues long: Large ribosomal subunit protein bL27 (83 aa).

A disordered region spans residues 1 to 25 (MAHKKGQGASRNGRDSESKRLGLKV).

Belongs to the bacterial ribosomal protein bL27 family.

This is Large ribosomal subunit protein bL27 from Chlamydia muridarum (strain MoPn / Nigg).